The chain runs to 549 residues: Cytoplasmic trehalase (549 aa).

Substrate-binding positions include Arg168, 175-176 (WD), Asn212, 221-223 (RSQ), 292-294 (RDE), and Gly324. Residues Asp326 and Glu509 each act as proton donor/acceptor in the active site. A substrate-binding site is contributed by Glu525.

Belongs to the glycosyl hydrolase 37 family. In terms of assembly, monomer.

The protein resides in the cytoplasm. It catalyses the reaction alpha,alpha-trehalose + H2O = alpha-D-glucose + beta-D-glucose. It participates in glycan degradation; trehalose degradation; D-glucose from alpha,alpha-trehalose: step 1/1. In terms of biological role, hydrolyzes trehalose to glucose. Could be involved, in cells returning to low osmolarity conditions, in the utilization of the accumulated cytoplasmic trehalose, which was synthesized in response to high osmolarity. The polypeptide is Cytoplasmic trehalase (Salmonella arizonae (strain ATCC BAA-731 / CDC346-86 / RSK2980)).